A 328-amino-acid polypeptide reads, in one-letter code: Nickel import system permease protein NikB (328 aa).

6 helical membrane-spanning segments follow: residues 11–31 (LIQM…LMKL), 104–124 (LLIS…LGII), 139–159 (VIST…LLFI), 170–190 (ILSQ…AYII), 229–249 (ILPI…GTVV), and 279–299 (VLFI…LTLL). Residues 100–297 (APITLLISFS…IINTIADLLT (198 aa)) form the ABC transmembrane type-1 domain.

It belongs to the binding-protein-dependent transport system permease family. OppBC subfamily. As to quaternary structure, the complex is composed of two ATP-binding proteins (NikD and NikE), two transmembrane proteins (NikB and NikC) and a solute-binding protein (NikA).

It is found in the cell membrane. Functionally, part of the ABC transporter complex NikABCDE (Opp2) involved in nickel import. Probably responsible for the translocation of the substrate across the membrane. The sequence is that of Nickel import system permease protein NikB from Staphylococcus aureus (strain MRSA252).